A 314-amino-acid polypeptide reads, in one-letter code: Trihelix transcription factor ASR3 (314 aa).

Positions methionine 1 to alanine 34 are disordered. In terms of domain architecture, Myb-like spans arginine 38 to alanine 104. A Nuclear localization signal motif is present at residues cysteine 84 to arginine 91. The short motif at leucine 161–leucine 165 is the EAR 1 element. Threonine 189 is modified (phosphothreonine; by MAPK4). Positions cysteine 207–lysine 255 are disordered. Residues leucine 280–leucine 284 carry the EAR 2 motif.

Homodimer. Interacts directly with MPK4. Post-translationally, phosphorylated on Thr-189 by MPK4 in response to microbe-associated molecular patterns (MAMPs, e.g. flg22, elf18, chitin, and LPS). This phosphorylation enhances DNA-binding and thus negatively regulates immune gene expression.

Its subcellular location is the nucleus. Its function is as follows. Transcriptional repressor that binds DNA and plays a negative role in regulating microbe-associated molecular patterns-(MAMPs, e.g. flg22, elf18, chitin, and LPS) triggered immunity (PTI) by negatively regulating immune gene expression. This Arabidopsis thaliana (Mouse-ear cress) protein is Trihelix transcription factor ASR3.